A 176-amino-acid polypeptide reads, in one-letter code: Retinol-binding protein 4-B (176 aa).

The residue at position 1 (serine 1) is an N-acetylserine. 3 disulfide bridges follow: cysteine 3/cysteine 159, cysteine 69/cysteine 173, and cysteine 119/cysteine 128. Glutamine 97 serves as a coordination point for substrate.

This sequence belongs to the calycin superfamily. Lipocalin family.

The protein resides in the secreted. RBP delivers retinol from the liver stores to the peripheral tissues. In plasma, the RBP-retinol complex interacts with transthyretin, this prevents its loss by filtration through the kidney glomeruli. The polypeptide is Retinol-binding protein 4-B (rbp4b) (Oncorhynchus mykiss (Rainbow trout)).